The following is a 210-amino-acid chain: MTRLVLASASAGRLKVLRQAGVDPLVVVSGVDEDAVIAALGPDASPSAVVCALATAKADRVAGALQAGVAADCVVVGCDSMLFIDGGLCGKPGSADAALRQWRRIGGRSGGLYTGHCLLRLRDGDITHREVESACTTVHFASPVEADLRAYVAGGEPLAVAGGFTLDGLGGWFVDGIDGDPSNVIGVSLPLLRTLLTRVGLSVSALWAAD.

Catalysis depends on Asp-79, which acts as the Proton acceptor.

This sequence belongs to the Maf family. The cofactor is a divalent metal cation.

The protein resides in the cytoplasm. The enzyme catalyses a ribonucleoside 5'-triphosphate + H2O = a ribonucleoside 5'-phosphate + diphosphate + H(+). The catalysed reaction is a 2'-deoxyribonucleoside 5'-triphosphate + H2O = a 2'-deoxyribonucleoside 5'-phosphate + diphosphate + H(+). Nucleoside triphosphate pyrophosphatase. May have a dual role in cell division arrest and in preventing the incorporation of modified nucleotides into cellular nucleic acids. The protein is Nucleoside triphosphate pyrophosphatase of Mycolicibacterium paratuberculosis (strain ATCC BAA-968 / K-10) (Mycobacterium paratuberculosis).